A 433-amino-acid polypeptide reads, in one-letter code: Hps1-dma1 cluster O-methyltransferase (433 aa).

The segment at 36-55 (NGHPERSLNSTDSVRLSDAP) is disordered. D285 contacts S-adenosyl-L-methionine. H331 functions as the Proton acceptor in the catalytic mechanism.

This sequence belongs to the class I-like SAM-binding methyltransferase superfamily. Cation-independent O-methyltransferase family. COMT subfamily.

Its pathway is secondary metabolite biosynthesis. Its function is as follows. O-methyltransferase; part of the hps1-dma1 gene cluster that probably mediates the biosynthesis a derivative of cyclopiazonic acid (CPA). The hybrid polyketide synthase-nonribosomal peptide synthetase (PKS-NRPS) nps1 might incorporates acetyl-CoA, malonyl-CoA, and tryptophan (Trp) and utilizes a C-terminal redox-incompetent reductase domain to make and release the tryptophan tetramic acid, cyclo-acetoacetyl-L-tryptophan (c-AATrp), as the first intermediate in the pathway. In addition, the cluster also includes the tryptophan dimethylallyltransferase dma1, the FAD-dependent oxidoreductase toxD, the cytochrome P450 monooxygenase cyp3.1 and the methyltransferase DOTSEDRAFT_139328; the latter 2 being not present in all CPA-producing fungi but involved in additional modifications that occur in biosynthesis the of a range of CPA and CPA-like products. Further studies are required to clarify whether the CPA-like hps1-dma1 cluster is functional or a non-functional relic reflecting evolution of D.septosporum. In Dothistroma septosporum (strain NZE10 / CBS 128990) (Red band needle blight fungus), this protein is Hps1-dma1 cluster O-methyltransferase.